The primary structure comprises 1400 residues: DNA-directed RNA polymerase subunit beta' (1400 aa).

Residues Cys-71, Cys-73, Cys-86, and Cys-89 each coordinate Zn(2+). Mg(2+) is bound by residues Asp-462, Asp-464, and Asp-466. Zn(2+)-binding residues include Cys-810, Cys-884, Cys-891, and Cys-894. The segment at 1378 to 1400 (EKQATIVPPAAPEAEPLALPPAE) is disordered.

This sequence belongs to the RNA polymerase beta' chain family. In terms of assembly, the RNAP catalytic core consists of 2 alpha, 1 beta, 1 beta' and 1 omega subunit. When a sigma factor is associated with the core the holoenzyme is formed, which can initiate transcription. Requires Mg(2+) as cofactor. Zn(2+) serves as cofactor.

The enzyme catalyses RNA(n) + a ribonucleoside 5'-triphosphate = RNA(n+1) + diphosphate. DNA-dependent RNA polymerase catalyzes the transcription of DNA into RNA using the four ribonucleoside triphosphates as substrates. This chain is DNA-directed RNA polymerase subunit beta', found in Rhodopseudomonas palustris (strain BisB5).